A 519-amino-acid polypeptide reads, in one-letter code: DNA-directed RNA polymerase subunit Rpo2N (519 aa).

The protein belongs to the RNA polymerase beta chain family. In terms of assembly, part of the RNA polymerase complex.

Its subcellular location is the cytoplasm. The enzyme catalyses RNA(n) + a ribonucleoside 5'-triphosphate = RNA(n+1) + diphosphate. DNA-dependent RNA polymerase (RNAP) catalyzes the transcription of DNA into RNA using the four ribonucleoside triphosphates as substrates. The Rpo2 subunit (Rpo2N and Rpo2C in this organism) is implicated in DNA promoter recognition and in nucleotide binding. This Methanothermobacter thermautotrophicus (strain ATCC 29096 / DSM 1053 / JCM 10044 / NBRC 100330 / Delta H) (Methanobacterium thermoautotrophicum) protein is DNA-directed RNA polymerase subunit Rpo2N.